We begin with the raw amino-acid sequence, 308 residues long: Probable manganese-dependent inorganic pyrophosphatase (308 aa).

Residues His9, Asp13, Asp15, Asp75, His97, and Asp149 each contribute to the Mn(2+) site.

The protein belongs to the PPase class C family. It depends on Mn(2+) as a cofactor.

It localises to the cytoplasm. It carries out the reaction diphosphate + H2O = 2 phosphate + H(+). The chain is Probable manganese-dependent inorganic pyrophosphatase from Bacillus pumilus (strain SAFR-032).